Consider the following 96-residue polypeptide: Putative septation protein SpoVG (96 aa).

This sequence belongs to the SpoVG family.

Its function is as follows. Essential for sporulation. Interferes with or is a negative regulator of the pathway leading to asymmetric septation. This is Putative septation protein SpoVG from Priestia megaterium (Bacillus megaterium).